Here is a 306-residue protein sequence, read N- to C-terminus: Ribosomal RNA small subunit methyltransferase H (306 aa).

Residues 37–39 (GGH), aspartate 56, aspartate 102, and glutamine 109 each bind S-adenosyl-L-methionine.

Belongs to the methyltransferase superfamily. RsmH family.

The protein localises to the cytoplasm. It catalyses the reaction cytidine(1402) in 16S rRNA + S-adenosyl-L-methionine = N(4)-methylcytidine(1402) in 16S rRNA + S-adenosyl-L-homocysteine + H(+). Its function is as follows. Specifically methylates the N4 position of cytidine in position 1402 (C1402) of 16S rRNA. The chain is Ribosomal RNA small subunit methyltransferase H from Nautilia profundicola (strain ATCC BAA-1463 / DSM 18972 / AmH).